Consider the following 59-residue polypeptide: Small ribosomal subunit protein eS17 (59 aa).

It belongs to the eukaryotic ribosomal protein eS17 family.

The chain is Small ribosomal subunit protein eS17 from Halobacterium salinarum (strain ATCC 29341 / DSM 671 / R1).